Here is a 197-residue protein sequence, read N- to C-terminus: Protein tyrosine phosphatase receptor type C-associated protein (197 aa).

The helical transmembrane segment at 33–53 (VVTIVLLLLLLLLLVTALALA) threads the bilayer. Ser99 and Ser103 each carry phosphoserine. 2 disordered regions span residues 120-164 (GPEE…GSSA) and 177-197 (SAAW…VTAL). Residues 124–145 (AAAKEEEQRCQAEQTRDPRDTD) are compositionally biased toward basic and acidic residues.

Interacts with CD45/PTPRC. In terms of processing, phosphorylated on tyrosine residues. Leukocyte-specific. Expressed in B- and T-cell lines, in spleen, thymus, and bone marrow of adult mice, and in embryos.

It localises to the membrane. The protein is Protein tyrosine phosphatase receptor type C-associated protein (Ptprcap) of Mus musculus (Mouse).